A 208-amino-acid polypeptide reads, in one-letter code: ATP-dependent Clp protease proteolytic subunit (208 aa).

S107 (nucleophile) is an active-site residue. Residue H132 is part of the active site.

Belongs to the peptidase S14 family. In terms of assembly, fourteen ClpP subunits assemble into 2 heptameric rings which stack back to back to give a disk-like structure with a central cavity, resembling the structure of eukaryotic proteasomes.

The protein localises to the cytoplasm. The enzyme catalyses Hydrolysis of proteins to small peptides in the presence of ATP and magnesium. alpha-casein is the usual test substrate. In the absence of ATP, only oligopeptides shorter than five residues are hydrolyzed (such as succinyl-Leu-Tyr-|-NHMec, and Leu-Tyr-Leu-|-Tyr-Trp, in which cleavage of the -Tyr-|-Leu- and -Tyr-|-Trp bonds also occurs).. Its function is as follows. Cleaves peptides in various proteins in a process that requires ATP hydrolysis. Has a chymotrypsin-like activity. Plays a major role in the degradation of misfolded proteins. The sequence is that of ATP-dependent Clp protease proteolytic subunit from Methylobacterium radiotolerans (strain ATCC 27329 / DSM 1819 / JCM 2831 / NBRC 15690 / NCIMB 10815 / 0-1).